Consider the following 736-residue polypeptide: Catalase-peroxidase (736 aa).

The N-terminal stretch at methionine 1–alanine 21 is a signal peptide. A cross-link (tryptophyl-tyrosyl-methioninium (Trp-Tyr) (with M-250)) is located at residues tryptophan 102 to tyrosine 224. The active-site Proton acceptor is the histidine 103. The tryptophyl-tyrosyl-methioninium (Tyr-Met) (with W-102) cross-link spans tyrosine 224–methionine 250. Position 265 (histidine 265) interacts with heme b.

The protein belongs to the peroxidase family. Peroxidase/catalase subfamily. As to quaternary structure, homodimer or homotetramer. It depends on heme b as a cofactor. Post-translationally, formation of the three residue Trp-Tyr-Met cross-link is important for the catalase, but not the peroxidase activity of the enzyme.

It carries out the reaction H2O2 + AH2 = A + 2 H2O. It catalyses the reaction 2 H2O2 = O2 + 2 H2O. Functionally, bifunctional enzyme with both catalase and broad-spectrum peroxidase activity. The chain is Catalase-peroxidase from Shewanella woodyi (strain ATCC 51908 / MS32).